Reading from the N-terminus, the 87-residue chain is Phosphoribosyl-ATP pyrophosphatase (87 aa).

Belongs to the PRA-PH family.

It localises to the cytoplasm. It catalyses the reaction 1-(5-phospho-beta-D-ribosyl)-ATP + H2O = 1-(5-phospho-beta-D-ribosyl)-5'-AMP + diphosphate + H(+). It participates in amino-acid biosynthesis; L-histidine biosynthesis; L-histidine from 5-phospho-alpha-D-ribose 1-diphosphate: step 2/9. The chain is Phosphoribosyl-ATP pyrophosphatase from Nocardia farcinica (strain IFM 10152).